We begin with the raw amino-acid sequence, 313 residues long: Olfactory receptor 8B2 (313 aa).

At 1 to 25 (MLARNNSLVTEFILAGLTDHPEFRQ) the chain is on the extracellular side. A glycan (N-linked (GlcNAc...) asparagine) is linked at Asn-5. The helical transmembrane segment at 26–46 (PLFFLFLVIYIVTMVGNLGLI) threads the bilayer. Over 47 to 54 (TLFGLNSH) the chain is Cytoplasmic. A helical membrane pass occupies residues 55–75 (LHTPMYYFLFNLSFIDLCYSS). The Extracellular segment spans residues 76 to 99 (VFTPKMLMNFVSKKNIISNVGCMT). Cys-97 and Cys-189 are joined by a disulfide. Residues 100–120 (RLFFFLFFVISECYMLTSMAY) form a helical membrane-spanning segment. At 121–139 (DRYVAICNPLLYKVTMSHQ) the chain is on the cytoplasmic side. A helical membrane pass occupies residues 140-160 (VCSMLTFAAYIMGLAGATAHT). Topologically, residues 161-197 (GCMLRLTFCSANIINHYLCDILPLLQLSCTSTYVNEV) are extracellular. Residues 198-217 (VVLIVVGTNITVPSCTILIS) traverse the membrane as a helical segment. At 218 to 237 (YVFIVTSILHIKSTQGRSKA) the chain is on the cytoplasmic side. A helical membrane pass occupies residues 238–258 (FSTCSSHVIALSLFFGSAAFM). The Extracellular segment spans residues 259–270 (YIKYSSGSMEQG). A helical transmembrane segment spans residues 271–291 (KVSSVFYTNVVPMLNPLIYSL). At 292 to 313 (RNKDVKVALRKALIKIQRRNIF) the chain is on the cytoplasmic side.

The protein belongs to the G-protein coupled receptor 1 family.

The protein localises to the cell membrane. Its function is as follows. Odorant receptor. The chain is Olfactory receptor 8B2 (OR8B2) from Homo sapiens (Human).